The primary structure comprises 874 residues: Alanine--tRNA ligase (874 aa).

Zn(2+) contacts are provided by His562, His566, Cys664, and His668.

It belongs to the class-II aminoacyl-tRNA synthetase family. Requires Zn(2+) as cofactor.

It localises to the cytoplasm. The catalysed reaction is tRNA(Ala) + L-alanine + ATP = L-alanyl-tRNA(Ala) + AMP + diphosphate. Catalyzes the attachment of alanine to tRNA(Ala) in a two-step reaction: alanine is first activated by ATP to form Ala-AMP and then transferred to the acceptor end of tRNA(Ala). Also edits incorrectly charged Ser-tRNA(Ala) and Gly-tRNA(Ala) via its editing domain. The polypeptide is Alanine--tRNA ligase (Shewanella baltica (strain OS155 / ATCC BAA-1091)).